The following is a 1345-amino-acid chain: Aldehyde oxidase 2 (1345 aa).

One can recognise a 2Fe-2S ferredoxin-type domain in the interval 9–96 (DELEFFVNGK…GAAVTTVEGV (88 aa)). Residues cysteine 48, cysteine 53, cysteine 56, and cysteine 78 each contribute to the [2Fe-2S] cluster site. Glutamine 117 contacts Mo-molybdopterin. Cysteine 118, cysteine 121, cysteine 153, and cysteine 155 together coordinate [2Fe-2S] cluster. Cysteine 155 contributes to the Mo-molybdopterin binding site. In terms of domain architecture, FAD-binding PCMH-type spans 238–423 (FYGERITWIA…GSVYIPHSQK (186 aa)). Residues 266–273 (LISGNTAL), alanine 347, serine 356, histidine 360, aspartate 369, and leucine 413 contribute to the FAD site. Residues 812-813 (GF), 1094-1097 (ASVG), glutamine 1209, and leucine 1274 each bind Mo-molybdopterin. Glutamate 1276 (proton acceptor; for azaheterocycle hydroxylase activity) is an active-site residue.

This sequence belongs to the xanthine dehydrogenase family. Homodimer. [2Fe-2S] cluster is required as a cofactor. FAD serves as cofactor. The cofactor is Mo-molybdopterin.

It localises to the cytoplasm. The enzyme catalyses an aldehyde + O2 + H2O = a carboxylate + H2O2 + H(+). In terms of biological role, oxidase with broad substrate specificity, oxidizing aromatic azaheterocycles, such as phthalazine, as well as aldehydes, such as benzaldehyde and retinal. This Rattus norvegicus (Rat) protein is Aldehyde oxidase 2 (Aox2).